The sequence spans 76 residues: Small ribosomal subunit protein bS18 (76 aa).

This sequence belongs to the bacterial ribosomal protein bS18 family. Part of the 30S ribosomal subunit. Forms a tight heterodimer with protein bS6.

Binds as a heterodimer with protein bS6 to the central domain of the 16S rRNA, where it helps stabilize the platform of the 30S subunit. In Azotobacter vinelandii (strain DJ / ATCC BAA-1303), this protein is Small ribosomal subunit protein bS18.